The primary structure comprises 312 residues: Porphobilinogen deaminase (312 aa).

C243 carries the post-translational modification S-(dipyrrolylmethanemethyl)cysteine.

This sequence belongs to the HMBS family. Monomer. The cofactor is dipyrromethane.

It carries out the reaction 4 porphobilinogen + H2O = hydroxymethylbilane + 4 NH4(+). It participates in porphyrin-containing compound metabolism; protoporphyrin-IX biosynthesis; coproporphyrinogen-III from 5-aminolevulinate: step 2/4. In terms of biological role, tetrapolymerization of the monopyrrole PBG into the hydroxymethylbilane pre-uroporphyrinogen in several discrete steps. This is Porphobilinogen deaminase from Vibrio parahaemolyticus serotype O3:K6 (strain RIMD 2210633).